Consider the following 449-residue polypeptide: C4-dicarboxylate transport protein (449 aa).

The next 9 helical transmembrane spans lie at Ala5–Gly25, Leu45–Met65, Leu77–Val97, Gly149–Gly169, Val185–Met205, Cys231–Ile251, Gly298–Ala318, Thr332–Phe352, and Ile353–Ile373.

Belongs to the dicarboxylate/amino acid:cation symporter (DAACS) (TC 2.A.23) family.

It is found in the cell inner membrane. Its function is as follows. Responsible for the transport of dicarboxylates such as succinate, fumarate, and malate from the periplasm across the membrane. The sequence is that of C4-dicarboxylate transport protein from Dechloromonas aromatica (strain RCB).